Consider the following 243-residue polypeptide: UPF0246 protein SAK_2020 (243 aa).

It belongs to the UPF0246 family.

The chain is UPF0246 protein SAK_2020 from Streptococcus agalactiae serotype Ia (strain ATCC 27591 / A909 / CDC SS700).